The chain runs to 407 residues: Phosphopentomutase (407 aa).

The Mn(2+) site is built by aspartate 10, aspartate 306, histidine 311, aspartate 347, histidine 348, and histidine 359.

This sequence belongs to the phosphopentomutase family. Requires Mn(2+) as cofactor.

Its subcellular location is the cytoplasm. The catalysed reaction is 2-deoxy-alpha-D-ribose 1-phosphate = 2-deoxy-D-ribose 5-phosphate. It carries out the reaction alpha-D-ribose 1-phosphate = D-ribose 5-phosphate. It functions in the pathway carbohydrate degradation; 2-deoxy-D-ribose 1-phosphate degradation; D-glyceraldehyde 3-phosphate and acetaldehyde from 2-deoxy-alpha-D-ribose 1-phosphate: step 1/2. Functionally, isomerase that catalyzes the conversion of deoxy-ribose 1-phosphate (dRib-1-P) and ribose 1-phosphate (Rib-1-P) to deoxy-ribose 5-phosphate (dRib-5-P) and ribose 5-phosphate (Rib-5-P), respectively. The polypeptide is Phosphopentomutase (Yersinia enterocolitica serotype O:8 / biotype 1B (strain NCTC 13174 / 8081)).